Here is a 757-residue protein sequence, read N- to C-terminus: MDVNPTLLFLKVPAQNAISTTFPYTGDPPYSHGTGTGYTMDTVNRTHQYSEKGKWTTNTETGAPQLNPIDGPLPEDNEPSGYAQTDCVLEAMAFLEESHPGIFENSCLETMEIVQQTRVDKLTQGRQTYDWTLNRNQPAATALANTIEVFRSNGLTANESGRLIDFLKDVVESMDKKEMEITTHFQRKRRVRDNMTKKMVTQRTIGKKKQRLNKKSYLIRALTLNTMTKDAERGKLKRRAIATPGMQIRGFVYFVETLARSICEKLEQSGLPVGGNEKKAKLANVVRKMMTNSQDTELSFTITGDNTKWNENQNPRMFLAMITYITRNQPEWFRNVLSIAPIMFSNKMARLGKGYMFESKSMKLRTQIPAEMLASIDLKYFNESTRKKIEKIRPLLIDGTASLSPGMMMGMFNMLSTVLGVSILNLGQKRYTKTTYWWDGLQSSDDFALIVNAPNHEGIQAGVDRFYRTCKLVGINMSKKKSYINRTGTFEFTSFFYRYGFVANFSMELPSFGVSGINESADMSIGVTVIKNNMINNDLGPATAQMALQLFIKDYRYTYRCHRGDTQIQTRRSFELKKLWEQTRSKAGLLVSDGGPNLYNIRNLHIPEVCLKWELMDEDYQGRLCNPLNPFVSHKEIESVNNAVVMPAHGPAKSMEYDAVATTHSWIPKRNRSILNTSQRGILEDEQMYQKCCNLFEKFFPSSSYRRPVGISSMVEAMVSRARIDARIDFESGRIKKEEFAEIMKICSTIEELRRQK.

The interval 50-82 (SEKGKWTTNTETGAPQLNPIDGPLPEDNEPSGY) is disordered. The span at 55 to 64 (WTTNTETGAP) shows a compositional bias: polar residues. 2 consecutive short sequence motifs (nuclear localization signal) follow at residues 187-195 (RKRRVRDNM) and 203-216 (RTIG…NKKS). Residues 249-256 (RGFVYFVE) form a promoter-binding site region. One can recognise a RdRp catalytic domain in the interval 286 to 483 (VRKMMTNSQD…GINMSKKKSY (198 aa)).

This sequence belongs to the influenza viruses polymerase PB1 family. In terms of assembly, influenza RNA polymerase is composed of three subunits: PB1, PB2 and PA. Interacts (via N-terminus) with PA (via C-terminus). Interacts (via C-terminus) with PB2 (via N-terminus); this interaction is essential for transcription initiation. Phosphorylated by host PRKCA.

It localises to the host nucleus. The protein localises to the host cytoplasm. It carries out the reaction RNA(n) + a ribonucleoside 5'-triphosphate = RNA(n+1) + diphosphate. Functionally, RNA-dependent RNA polymerase which is responsible for replication and transcription of virus RNA segments. The transcription of viral mRNAs occurs by a unique mechanism called cap-snatching. 5' methylated caps of cellular mRNAs are cleaved after 10-13 nucleotides by PA. In turn, these short capped RNAs are used as primers by PB1 for transcription of viral mRNAs. During virus replication, PB1 initiates RNA synthesis and copy vRNA into complementary RNA (cRNA) which in turn serves as a template for the production of more vRNAs. This chain is RNA-directed RNA polymerase catalytic subunit, found in Influenza A virus (strain A/Grey teal/Australia/2/1979 H4N4).